We begin with the raw amino-acid sequence, 197 residues long: MVNVRFYRNYGKTFKKPRRPYEKERLDAELKLVGEYGLRCKRELWRVQYTLSRIRNAARELLTLDEKNPRRIFEGEALLRRMNRYGLLDETQNKLDYVLALTVENFLERRLQTIVFKSGMAKSIHHARVLIRQRHIRVGRQLVNIPSFMVRVESQKHVDFSLTSPFGGGRPGRVKRRNERAGAKKASGGDGDEDDEE.

The 75-residue stretch at 109-183 (RRLQTIVFKS…VKRRNERAGA (75 aa)) folds into the S4 RNA-binding domain. The segment at 161 to 197 (SLTSPFGGGRPGRVKRRNERAGAKKASGGDGDEDDEE) is disordered.

The protein belongs to the universal ribosomal protein uS4 family. In terms of assembly, binds to the translation initiation factors TIF3E1.

This chain is Small ribosomal subunit protein uS4y (RPS9C), found in Arabidopsis thaliana (Mouse-ear cress).